A 424-amino-acid polypeptide reads, in one-letter code: Vasopressin V1b receptor (424 aa).

The tract at residues 1–22 is disordered; that stretch reads MDSGPLWDANPTPRGTLSAPNA. The Extracellular portion of the chain corresponds to 1–35; that stretch reads MDSGPLWDANPTPRGTLSAPNATTPWLGRDEELAK. The span at 13 to 22 shows a compositional bias: polar residues; it reads PRGTLSAPNA. Asn-21 is a glycosylation site (N-linked (GlcNAc...) asparagine). Residues 36-59 form a helical membrane-spanning segment; that stretch reads VEIGVLATVLVLATGGNLAVLLTL. Residues 60–71 lie on the Cytoplasmic side of the membrane; sequence GQLGRKRSRMHL. Residues 72 to 93 traverse the membrane as a helical segment; sequence FVLHLALTDLAVALFQVLPQLL. At 94–108 the chain is on the extracellular side; that stretch reads WDITYRFQGPDLLCR. Cys-107 and Cys-186 are oxidised to a cystine. The chain crosses the membrane as a helical span at residues 109 to 130; it reads AVKYLQVLSMFASTYMLLAMTL. The Cytoplasmic segment spans residues 131-151; the sequence is DRYLAVCHPLRSLQQPGQSTY. The helical transmembrane segment at 152–173 threads the bilayer; sequence LLIAAPWLLAAIFSLPQVFIFS. The Extracellular portion of the chain corresponds to 174–201; sequence LREVIQGSGVLDCWADFGFPWGPRAYLT. Residues 202 to 222 form a helical membrane-spanning segment; it reads WTTLAIFVLPVTMLTACYSLI. Over 223-283 the chain is Cytoplasmic; it reads CHEICKNLKV…RAKIRTVKMT (61 aa). A helical membrane pass occupies residues 284–303; sequence FVIVLAYIACWAPFFSVQMW. The Extracellular portion of the chain corresponds to 304–321; that stretch reads SVWDKNAPDEDSTNVAFT. A helical membrane pass occupies residues 322–341; that stretch reads ISMLLGNLNSCCNPWIYMGF. Topologically, residues 342–424 are cytoplasmic; that stretch reads NSHLLPRPLR…GEGTAETIIF (83 aa). The interval 398-417 is disordered; it reads SGRPRPEESPRDLELADGEG. Positions 401–411 are enriched in basic and acidic residues; the sequence is PRPEESPRDLE.

It belongs to the G-protein coupled receptor 1 family. Vasopressin/oxytocin receptor subfamily.

The protein localises to the cell membrane. Its function is as follows. Receptor for arginine vasopressin. The activity of this receptor is mediated by G proteins which activate a phosphatidyl-inositol-calcium second messenger system. (Microbial infection) During SARS coronavirus-2/SARS-CoV-2 infection, may recognize and internalize the complex formed by AVP/Arg-vasopressin, SARS-CoV-2 spike protein and secreted ACE2 through DNM2/dynamin 2-dependent endocytosis. The polypeptide is Vasopressin V1b receptor (Homo sapiens (Human)).